Here is a 156-residue protein sequence, read N- to C-terminus: Putative thymidylate kinase (156 aa).

Residue 7–14 (GLDGTGKT) coordinates ATP.

This sequence belongs to the thymidylate kinase family.

It carries out the reaction dTMP + ATP = dTDP + ADP. Its pathway is pyrimidine metabolism; dTTP biosynthesis. Its function is as follows. Catalyzes the conversion of dTMP to dTDP. This Acidianus convivator (ABV) protein is Putative thymidylate kinase.